A 281-amino-acid polypeptide reads, in one-letter code: Large ribosomal subunit protein mL46 (281 aa).

The transit peptide at 1–19 directs the protein to the mitochondrion; it reads MKVNLMLKRGLATATATAS. Over residues 106–118 the composition is skewed to basic and acidic residues; it reads RERSTKQEVKLSD. The segment at 106-141 is disordered; sequence RERSTKQEVKLSDDSTVAFSNNQKEQSKDDVNRPVI. The segment covering 119–129 has biased composition (polar residues); the sequence is DSTVAFSNNQK.

Belongs to the mitochondrion-specific ribosomal protein mL46 family. As to quaternary structure, component of the mitochondrial large ribosomal subunit (mt-LSU). Mature yeast 74S mitochondrial ribosomes consist of a small (37S) and a large (54S) subunit. The 37S small subunit contains a 15S ribosomal RNA (15S mt-rRNA) and 34 different proteins. The 54S large subunit contains a 21S rRNA (21S mt-rRNA) and 46 different proteins.

Its subcellular location is the mitochondrion. Functionally, component of the mitochondrial ribosome (mitoribosome), a dedicated translation machinery responsible for the synthesis of mitochondrial genome-encoded proteins, including at least some of the essential transmembrane subunits of the mitochondrial respiratory chain. The mitoribosomes are attached to the mitochondrial inner membrane and translation products are cotranslationally integrated into the membrane. This is Large ribosomal subunit protein mL46 (MRPL17) from Saccharomyces cerevisiae (strain ATCC 204508 / S288c) (Baker's yeast).